The following is a 157-amino-acid chain: Crossover junction endodeoxyribonuclease RuvC (157 aa).

Residues D7, E67, and D140 contribute to the active site. Residues D7, E67, and D140 each contribute to the Mg(2+) site.

Belongs to the RuvC family. As to quaternary structure, homodimer which binds Holliday junction (HJ) DNA. The HJ becomes 2-fold symmetrical on binding to RuvC with unstacked arms; it has a different conformation from HJ DNA in complex with RuvA. In the full resolvosome a probable DNA-RuvA(4)-RuvB(12)-RuvC(2) complex forms which resolves the HJ. The cofactor is Mg(2+).

Its subcellular location is the cytoplasm. It catalyses the reaction Endonucleolytic cleavage at a junction such as a reciprocal single-stranded crossover between two homologous DNA duplexes (Holliday junction).. In terms of biological role, the RuvA-RuvB-RuvC complex processes Holliday junction (HJ) DNA during genetic recombination and DNA repair. Endonuclease that resolves HJ intermediates. Cleaves cruciform DNA by making single-stranded nicks across the HJ at symmetrical positions within the homologous arms, yielding a 5'-phosphate and a 3'-hydroxyl group; requires a central core of homology in the junction. The consensus cleavage sequence is 5'-(A/T)TT(C/G)-3'. Cleavage occurs on the 3'-side of the TT dinucleotide at the point of strand exchange. HJ branch migration catalyzed by RuvA-RuvB allows RuvC to scan DNA until it finds its consensus sequence, where it cleaves and resolves the cruciform DNA. The polypeptide is Crossover junction endodeoxyribonuclease RuvC (Rickettsia bellii (strain OSU 85-389)).